A 244-amino-acid chain; its full sequence is Probable transcriptional regulatory protein CHAB381_1426 (244 aa).

This sequence belongs to the TACO1 family.

The protein localises to the cytoplasm. The chain is Probable transcriptional regulatory protein CHAB381_1426 from Campylobacter hominis (strain ATCC BAA-381 / DSM 21671 / CCUG 45161 / LMG 19568 / NCTC 13146 / CH001A).